Reading from the N-terminus, the 181-residue chain is Heavy metal-associated isoprenylated plant protein 46 (181 aa).

The HMA domain maps to 2-71 (KQKILIRVTM…KVAFAELVSV (70 aa)). Residues 74–121 (VEPPKKEDEKKGGDGKGAEGKGGDQKGGDKKGPDDKEPPEPKPVPCYP) are disordered. A compositionally biased stretch (basic and acidic residues) spans 75–113 (EPPKKEDEKKGGDGKGAEGKGGDQKGGDKKGPDDKEPPE). A Cysteine methyl ester modification is found at Cys-178. Cys-178 carries S-farnesyl cysteine lipidation. Residues 179–181 (KIM) constitute a propeptide, removed in mature form.

Belongs to the HIPP family.

In terms of biological role, probable heavy-metal-binding protein. The polypeptide is Heavy metal-associated isoprenylated plant protein 46 (Arabidopsis thaliana (Mouse-ear cress)).